The primary structure comprises 122 residues: Small ribosomal subunit protein uS13 (122 aa).

The interval 97–122 (PVRGQRTKTNARTRKGPARTVAGKKK) is disordered.

The protein belongs to the universal ribosomal protein uS13 family. As to quaternary structure, part of the 30S ribosomal subunit. Forms a loose heterodimer with protein S19. Forms two bridges to the 50S subunit in the 70S ribosome.

Its function is as follows. Located at the top of the head of the 30S subunit, it contacts several helices of the 16S rRNA. In the 70S ribosome it contacts the 23S rRNA (bridge B1a) and protein L5 of the 50S subunit (bridge B1b), connecting the 2 subunits; these bridges are implicated in subunit movement. Contacts the tRNAs in the A and P-sites. The chain is Small ribosomal subunit protein uS13 from Geobacter sulfurreducens (strain ATCC 51573 / DSM 12127 / PCA).